Here is a 269-residue protein sequence, read N- to C-terminus: Hydroxyethylthiazole kinase (269 aa).

Met42 serves as a coordination point for substrate. Residues Arg118 and Ser164 each coordinate ATP. Gly191 is a substrate binding site.

This sequence belongs to the Thz kinase family. Mg(2+) serves as cofactor.

The enzyme catalyses 5-(2-hydroxyethyl)-4-methylthiazole + ATP = 4-methyl-5-(2-phosphooxyethyl)-thiazole + ADP + H(+). Its pathway is cofactor biosynthesis; thiamine diphosphate biosynthesis; 4-methyl-5-(2-phosphoethyl)-thiazole from 5-(2-hydroxyethyl)-4-methylthiazole: step 1/1. In terms of biological role, catalyzes the phosphorylation of the hydroxyl group of 4-methyl-5-beta-hydroxyethylthiazole (THZ). The sequence is that of Hydroxyethylthiazole kinase from Listeria monocytogenes serovar 1/2a (strain ATCC BAA-679 / EGD-e).